Consider the following 311-residue polypeptide: Protoheme IX farnesyltransferase (311 aa).

9 helical membrane-spanning segments follow: residues 32–52 (VMSLVVFTALVGLMVSPVPIN), 53–73 (PWYGFLAIICIAVGGGGAGAL), 104–124 (FIFGMVLSLLSVLVMGSFINW), 125–145 (FAAFFLAFTIFFYVVIYTIWL), 153–173 (IVIGGASGAFPPMIGWAVTTG), 180–200 (FLLFLIIFMWTPPHFWALSLF), 224–244 (KQILFYTVLMVLCATAPCFTG), 245–265 (LGGVFYGIFSTILGIIFIYFA), and 285–305 (FFFSLLYLAAVFGALLIESLV).

It belongs to the UbiA prenyltransferase family. Protoheme IX farnesyltransferase subfamily.

Its subcellular location is the cell inner membrane. It catalyses the reaction heme b + (2E,6E)-farnesyl diphosphate + H2O = Fe(II)-heme o + diphosphate. It functions in the pathway porphyrin-containing compound metabolism; heme O biosynthesis; heme O from protoheme: step 1/1. Its function is as follows. Converts heme B (protoheme IX) to heme O by substitution of the vinyl group on carbon 2 of heme B porphyrin ring with a hydroxyethyl farnesyl side group. The polypeptide is Protoheme IX farnesyltransferase (Bartonella tribocorum (strain CIP 105476 / IBS 506)).